A 1199-amino-acid chain; its full sequence is Metabotropic glutamate receptor 1 (1199 aa).

Residues 1 to 18 (MVRLLLIFFPMIFLEMSI) form the signal peptide. Over 19 to 592 (LPRMPDRKVL…VRYLEWSDIE (574 aa)) the chain is Extracellular. Residues Cys67 and Cys109 are joined by a disulfide bond. Residue Tyr74 participates in L-glutamate binding. Asn98 is a glycosylation site (N-linked (GlcNAc...) asparagine). Residues Ser165 and 186 to 188 (SAT) each bind L-glutamate. A glycan (N-linked (GlcNAc...) asparagine) is linked at Asn223. Tyr236 serves as a coordination point for L-glutamate. A disulfide bond links Cys289 and Cys291. Asp318 contacts L-glutamate. Cys378 and Cys394 form a disulfide bridge. N-linked (GlcNAc...) asparagine glycosylation occurs at Asn397. Lys409 lines the L-glutamate pocket. A disulfide bond links Cys432 and Cys439. N-linked (GlcNAc...) asparagine glycosylation occurs at Asn515. A helical transmembrane segment spans residues 593–615 (SIIAIAFSCLGILVTLFVTLIFV). The Cytoplasmic segment spans residues 616 to 629 (LYRDTPVVKSSSRE). A helical transmembrane segment spans residues 630-650 (LCYIILAGIFLGYVCPFTLIA). At 651 to 658 (KPTTTSCY) the chain is on the extracellular side. Cys657 and Cys746 are oxidised to a cystine. Residues 659 to 680 (LQRLLVGLSSAMCYSALVTKTN) form a helical membrane-spanning segment. Residues 681 to 703 (RIARILAGSKKKICTRKPRFMSA) lie on the Cytoplasmic side of the membrane. Residues 704–727 (WAQVIIASILISVQLTLVVTLIIM) traverse the membrane as a helical segment. At 728–750 (EPPMPILSYPSIKEVYLICNTSN) the chain is on the extracellular side. A helical membrane pass occupies residues 751 to 772 (LGVVAPVGYNGLLIMSCTYYAF). Residues 773 to 785 (KTRNVPANFNEAK) are Cytoplasmic-facing. The chain crosses the membrane as a helical span at residues 786-807 (YIAFTMYTTCIIWLAFVPIYFG). Over 808-815 (SNYKIITT) the chain is Extracellular. The chain crosses the membrane as a helical span at residues 816–840 (CFAVSLSVTVALGCMFTPKMYIIIA). The Cytoplasmic portion of the chain corresponds to 841–1199 (KPERNVRSAF…RDYKQSSSTL (359 aa)). Ser853 carries the post-translational modification Phosphoserine. Thr871 bears the Phosphothreonine mark. 3 disordered regions span residues 882-905 (GAGNANSNGKSVSWSEPGGRQAPK), 959-1036 (EEDN…QPKS), and 1056-1081 (HAVLAGPGTPGNSLRSLYPPPPPPQH). Over residues 885 to 895 (NANSNGKSVSW) the composition is skewed to polar residues. Phosphoserine occurs at positions 894 and 969. Residues 1012–1033 (GLPPPLPQQQPQQPPPQQPPQQ) show a composition bias toward pro residues. Ser1098 is subject to Phosphoserine. The tract at residues 1120–1177 (EREGNTEEDELEEEEDLPTASKLTPEDSPALTPPSPFRDSVASGSSVPSSPVSESVLC) is disordered. Residues 1125–1136 (TEEDELEEEEDL) are compositionally biased toward acidic residues. At Ser1147 the chain carries Phosphoserine. Position 1151 is a phosphothreonine (Thr1151). Ser1154 is subject to Phosphoserine. A compositionally biased stretch (low complexity) spans 1159-1175 (SVASGSSVPSSPVSESV).

It belongs to the G-protein coupled receptor 3 family. In terms of assembly, homodimer; disulfide-linked. The PPXXF motif binds HOMER1, HOMER2 and HOMER3. Interacts with TAMALIN. Interacts with RYR1, RYR2, ITPR1, SHANK1 and SHANK3. Interacts with SIAH1. In terms of tissue distribution, predominantly expressed in cerebellar Purkinje cells, CA2-CA3 pyramidal cells of the hippocampus, and mitral and tufted cells of the olfactory bulb.

The protein resides in the cell membrane. The protein localises to the postsynaptic cell membrane. It localises to the cell projection. It is found in the dendrite. In terms of biological role, G-protein coupled receptor for glutamate. Ligand binding causes a conformation change that triggers signaling via guanine nucleotide-binding proteins (G proteins) and modulates the activity of down-stream effectors. Signaling activates a phosphatidylinositol-calcium second messenger system. May participate in the central action of glutamate in the CNS, such as long-term potentiation in the hippocampus and long-term depression in the cerebellum. May function in the light response in the retina. Induces GRID1 and GRID2 cation-channel activation via GNAQ-PLC-PKC pathway in dopaminergic neurons and cerebellar Purkinje cell, respectively. The protein is Metabotropic glutamate receptor 1 (Grm1) of Rattus norvegicus (Rat).